Consider the following 663-residue polypeptide: Protein pat-12 (663 aa).

Over residues M1–S15 the composition is skewed to polar residues. Disordered regions lie at residues M1 to Y78, R367 to T430, F517 to R546, and P597 to R663. The segment covering R367–R380 has biased composition (basic and acidic residues). Residues V381–H400 show a composition bias toward basic residues. The segment covering F517–S526 has biased composition (polar residues). Basic and acidic residues-rich tracts occupy residues F620–D640 and N649–R663.

In terms of assembly, interacts with vab-10 (via plankin domain). Isoform a: Expressed in the uterus, the vulva, the rectum, mechanosensory neurons and in head and tail neurons. Isoform e: Expressed in spermatheca and weakly in the vulva. Isoform f: Expressed in spermatheca and weakly in the vulva. Isoform i: Expressed in spermatheca and weakly in the vulva.

The protein resides in the apical cell membrane. It is found in the basal cell membrane. It localises to the cytoplasm. The protein localises to the cell junction. Its subcellular location is the hemidesmosome. The protein resides in the cell membrane. It is found in the cytoskeleton. Required for embryonic morphology and development. Plays both a functional and a structural role in the maintenance and probably biogenesis of fibrous organelles, a hemidesomosome-like junction structure, which ensures muscle stability and muscle connection to the external cuticle. In Caenorhabditis elegans, this protein is Protein pat-12.